Consider the following 517-residue polypeptide: Bifunctional purine biosynthesis protein PurH (517 aa).

The region spanning 1 to 145 (MSPLALVSVS…KNHKYVSVLV (145 aa)) is the MGS-like domain.

It belongs to the PurH family.

The catalysed reaction is (6R)-10-formyltetrahydrofolate + 5-amino-1-(5-phospho-beta-D-ribosyl)imidazole-4-carboxamide = 5-formamido-1-(5-phospho-D-ribosyl)imidazole-4-carboxamide + (6S)-5,6,7,8-tetrahydrofolate. It catalyses the reaction IMP + H2O = 5-formamido-1-(5-phospho-D-ribosyl)imidazole-4-carboxamide. It functions in the pathway purine metabolism; IMP biosynthesis via de novo pathway; 5-formamido-1-(5-phospho-D-ribosyl)imidazole-4-carboxamide from 5-amino-1-(5-phospho-D-ribosyl)imidazole-4-carboxamide (10-formyl THF route): step 1/1. It participates in purine metabolism; IMP biosynthesis via de novo pathway; IMP from 5-formamido-1-(5-phospho-D-ribosyl)imidazole-4-carboxamide: step 1/1. This Prochlorococcus marinus (strain MIT 9215) protein is Bifunctional purine biosynthesis protein PurH.